The sequence spans 389 residues: Migration and invasion-inhibitory protein (389 aa).

A compositionally biased stretch (low complexity) spans 44-54 (LDYSSSSNNLE). Disordered stretches follow at residues 44-80 (LDYS…WDPL) and 131-150 (KRPV…AQVP). Residues 58–70 (SQETSASSVAPNS) are compositionally biased toward polar residues. Over residues 71–80 (QDKRHVWDPL) the composition is skewed to basic and acidic residues. At Ser309 the chain carries Phosphoserine.

As to quaternary structure, interacts with IGFBP2.

Its function is as follows. Inhibits glioma cells invasion and down-regulates adhesion- and motility-associated genes such as NFKB2 and ICAM1. Exhibits opposing effects to IGFBP2 on cell invasion. In Rattus norvegicus (Rat), this protein is Migration and invasion-inhibitory protein (Miip).